A 205-amino-acid chain; its full sequence is Thymidylate kinase (205 aa).

11–18 (GVEGAGKS) contacts ATP.

Belongs to the thymidylate kinase family.

It carries out the reaction dTMP + ATP = dTDP + ADP. Its function is as follows. Phosphorylation of dTMP to form dTDP in both de novo and salvage pathways of dTTP synthesis. This Vesicomyosocius okutanii subsp. Calyptogena okutanii (strain HA) protein is Thymidylate kinase.